The chain runs to 755 residues: Subtilisin-like protease 4 (755 aa).

The signal sequence occupies residues 1–20 (MDYFLFIALTFLLTFHVHNA). The region spanning 41-119 (YIIHVTGPEG…ISAHPQRVLH (79 aa)) is the Inhibitor I9 domain. The Peptidase S8 domain occupies 128 to 611 (FLGLQQDTGV…SGHVNPSRAN (484 aa)). The active-site Charge relay system is Asp-153. An N-linked (GlcNAc...) asparagine glycan is attached at Asn-182. Catalysis depends on His-217, which acts as the Charge relay system. Residues Asn-297, Asn-325, Asn-393, Asn-468, and Asn-529 are each glycosylated (N-linked (GlcNAc...) asparagine). Positions 376-461 (PLAYAGKNGK…ATHVSYAAGI (86 aa)) constitute a PA domain. Catalysis depends on Ser-544, which acts as the Charge relay system. N-linked (GlcNAc...) asparagine glycosylation is found at Asn-706 and Asn-727.

It belongs to the peptidase S8 family.

The protein localises to the secreted. Its subcellular location is the extracellular space. It is found in the apoplast. Functionally, required for arbuscular mycorrhiza (AM) development during AM symbiosis with AM fungi (e.g. Glomeromycota intraradices). The chain is Subtilisin-like protease 4 from Lotus japonicus (Lotus corniculatus var. japonicus).